The sequence spans 104 residues: Large ribosomal subunit protein uL24 (104 aa).

The protein belongs to the universal ribosomal protein uL24 family. In terms of assembly, part of the 50S ribosomal subunit.

Its function is as follows. One of two assembly initiator proteins, it binds directly to the 5'-end of the 23S rRNA, where it nucleates assembly of the 50S subunit. In terms of biological role, one of the proteins that surrounds the polypeptide exit tunnel on the outside of the subunit. In Escherichia coli O81 (strain ED1a), this protein is Large ribosomal subunit protein uL24.